Reading from the N-terminus, the 60-residue chain is Large ribosomal subunit protein uL30 (60 aa).

Belongs to the universal ribosomal protein uL30 family. In terms of assembly, part of the 50S ribosomal subunit.

The polypeptide is Large ribosomal subunit protein uL30 (Staphylococcus epidermidis (strain ATCC 35984 / DSM 28319 / BCRC 17069 / CCUG 31568 / BM 3577 / RP62A)).